A 359-amino-acid polypeptide reads, in one-letter code: Src kinase-associated phosphoprotein 1 (359 aa).

The PH domain occupies 107 to 210 (NVIKQGYLEK…WVDQISFLLK (104 aa)). Tyr-142, Tyr-219, and Tyr-232 each carry phosphotyrosine. Residues 219-237 (YEEDEEEEEKEETYDDIDG) show a composition bias toward acidic residues. Residues 219 to 239 (YEEDEEEEEKEETYDDIDGFD) are disordered. Phosphotyrosine; by FYN is present on residues Tyr-271 and Tyr-295. The interaction with FYB1 stretch occupies residues 290 to 295 (RKGVDY). One can recognise an SH3 domain in the interval 294 to 355 (DYASYYQGLW…PKEYLTTAFE (62 aa)).

The protein belongs to the SKAP family. As to quaternary structure, homodimer. Interacts with FYN. Interacts with PTPRC. Interacts with GRB2 when phosphorylated on Tyr-271. Interacts with FYB1, which is required for SKAP2 protein stability. Part of a complex consisting of SKAP1, FYB1 and CLNK. Interacts with RASGRP1. Interacts with FYB2. Phosphorylated on tyrosines. Phosphorylation by FYN on Tyr-271 is required for GRB2 interaction. Phosphorylation by FYN on Tyr-295 abolishes interaction with FYB1. Tyr-232 is dephosphorylated by PTPRC. Highly expressed in thymocytes and peripheral blood lymphocytes. Also expressed in spleen cells and testis. Present in T-cells (at protein level).

It localises to the cytoplasm. The protein localises to the nucleus. It is found in the cell membrane. Its function is as follows. Positively regulates T-cell receptor signaling by enhancing the MAP kinase pathway. Required for optimal conjugation between T-cells and antigen-presenting cells by promoting the clustering of integrin ITGAL on the surface of T-cells. May be involved in high affinity immunoglobulin epsilon receptor signaling in mast cells. The sequence is that of Src kinase-associated phosphoprotein 1 (SKAP1) from Homo sapiens (Human).